The following is a 614-amino-acid chain: Dihydroxy-acid dehydratase (614 aa).

D81 is a Mg(2+) binding site. Residue C122 coordinates [2Fe-2S] cluster. Mg(2+) contacts are provided by D123 and K124. At K124 the chain carries N6-carboxylysine. C193 is a [2Fe-2S] cluster binding site. Residue E489 coordinates Mg(2+). Residue S515 is the Proton acceptor of the active site.

Belongs to the IlvD/Edd family. In terms of assembly, homodimer. The cofactor is [2Fe-2S] cluster. Mg(2+) serves as cofactor.

It carries out the reaction (2R)-2,3-dihydroxy-3-methylbutanoate = 3-methyl-2-oxobutanoate + H2O. The catalysed reaction is (2R,3R)-2,3-dihydroxy-3-methylpentanoate = (S)-3-methyl-2-oxopentanoate + H2O. It functions in the pathway amino-acid biosynthesis; L-isoleucine biosynthesis; L-isoleucine from 2-oxobutanoate: step 3/4. It participates in amino-acid biosynthesis; L-valine biosynthesis; L-valine from pyruvate: step 3/4. Its function is as follows. Functions in the biosynthesis of branched-chain amino acids. Catalyzes the dehydration of (2R,3R)-2,3-dihydroxy-3-methylpentanoate (2,3-dihydroxy-3-methylvalerate) into 2-oxo-3-methylpentanoate (2-oxo-3-methylvalerate) and of (2R)-2,3-dihydroxy-3-methylbutanoate (2,3-dihydroxyisovalerate) into 2-oxo-3-methylbutanoate (2-oxoisovalerate), the penultimate precursor to L-isoleucine and L-valine, respectively. The protein is Dihydroxy-acid dehydratase of Cellvibrio japonicus (strain Ueda107) (Pseudomonas fluorescens subsp. cellulosa).